A 335-amino-acid chain; its full sequence is Probable cytosolic iron-sulfur protein assembly protein Ciao1 (335 aa).

WD repeat units lie at residues 12–51, 57–96, 101–140, 146–185, 192–231, 250–289, and 301–335; these read GHKG…WSTK, GHKR…FECN, GHEN…EFEC, AHTQ…SDWD, SHTS…NDAG, QHSR…KRDE, and AHEQ…KVDD.

The protein belongs to the WD repeat CIA1 family.

Its function is as follows. Essential component of the cytosolic iron-sulfur (Fe/S) protein assembly machinery. Required for the maturation of extramitochondrial Fe/S proteins. This is Probable cytosolic iron-sulfur protein assembly protein Ciao1 from Drosophila pseudoobscura pseudoobscura (Fruit fly).